The primary structure comprises 360 residues: Endolytic murein transglycosylase (360 aa).

A helical transmembrane segment spans residues 16–36 (IILSSIVVLFLIIGGAFLYGK).

It belongs to the transglycosylase MltG family.

It localises to the cell membrane. It carries out the reaction a peptidoglycan chain = a peptidoglycan chain with N-acetyl-1,6-anhydromuramyl-[peptide] at the reducing end + a peptidoglycan chain with N-acetylglucosamine at the non-reducing end.. In terms of biological role, functions as a peptidoglycan terminase that cleaves nascent peptidoglycan strands endolytically to terminate their elongation. The sequence is that of Endolytic murein transglycosylase from Bacillus subtilis (strain 168).